We begin with the raw amino-acid sequence, 382 residues long: Bifunctional enzyme IspD/IspF (382 aa).

The tract at residues 1–225 (MTFSVVIVAA…EHLAGVARVT (225 aa)) is 2-C-methyl-D-erythritol 4-phosphate cytidylyltransferase. The interval 226 to 382 (RVGQGFDAHR…SAVVAVETPA (157 aa)) is 2-C-methyl-D-erythritol 2,4-cyclodiphosphate synthase. A divalent metal cation is bound by residues Asp-232 and His-234. Residues 232 to 234 (DAH) and 258 to 259 (HS) contribute to the 4-CDP-2-C-methyl-D-erythritol 2-phosphate site. His-266 lines the a divalent metal cation pocket. 4-CDP-2-C-methyl-D-erythritol 2-phosphate contacts are provided by residues 280–282 (DIG), 356–359 (TTTE), Phe-363, and Arg-366.

This sequence in the N-terminal section; belongs to the IspD/TarI cytidylyltransferase family. IspD subfamily. In the C-terminal section; belongs to the IspF family. Requires a divalent metal cation as cofactor.

It catalyses the reaction 2-C-methyl-D-erythritol 4-phosphate + CTP + H(+) = 4-CDP-2-C-methyl-D-erythritol + diphosphate. The enzyme catalyses 4-CDP-2-C-methyl-D-erythritol 2-phosphate = 2-C-methyl-D-erythritol 2,4-cyclic diphosphate + CMP. The protein operates within isoprenoid biosynthesis; isopentenyl diphosphate biosynthesis via DXP pathway; isopentenyl diphosphate from 1-deoxy-D-xylulose 5-phosphate: step 2/6. It participates in isoprenoid biosynthesis; isopentenyl diphosphate biosynthesis via DXP pathway; isopentenyl diphosphate from 1-deoxy-D-xylulose 5-phosphate: step 4/6. Its function is as follows. Bifunctional enzyme that catalyzes the formation of 4-diphosphocytidyl-2-C-methyl-D-erythritol from CTP and 2-C-methyl-D-erythritol 4-phosphate (MEP) (IspD), and catalyzes the conversion of 4-diphosphocytidyl-2-C-methyl-D-erythritol 2-phosphate (CDP-ME2P) to 2-C-methyl-D-erythritol 2,4-cyclodiphosphate (ME-CPP) with a corresponding release of cytidine 5-monophosphate (CMP) (IspF). This Caulobacter vibrioides (strain ATCC 19089 / CIP 103742 / CB 15) (Caulobacter crescentus) protein is Bifunctional enzyme IspD/IspF.